Reading from the N-terminus, the 309-residue chain is Olfactory receptor 1A1 (309 aa).

Residues Met1–Asp25 are Extracellular-facing. Asn5 is a glycosylation site (N-linked (GlcNAc...) asparagine). Residues Phe26–Ile49 form a helical membrane-spanning segment. Residues Cys50 to Asn57 are Cytoplasmic-facing. The helical transmembrane segment at Pro58–Pro79 threads the bilayer. At Lys80–Gln100 the chain is on the extracellular side. A disulfide bridge links Cys97 with Cys189. A helical transmembrane segment spans residues Met101–Tyr120. The Cytoplasmic segment spans residues Asp121–Arg139. The helical transmembrane segment at Ser140–Pro158 threads the bilayer. Residues His159–His195 are Extracellular-facing. Residues Val196 to Ile218 traverse the membrane as a helical segment. At Arg219 to Lys235 the chain is on the cytoplasmic side. A helical transmembrane segment spans residues Ala236–Tyr258. Over Phe259–Ala270 the chain is Extracellular. Asn264 carries N-linked (GlcNAc...) asparagine glycosylation. A helical membrane pass occupies residues Val271–Leu290. The Cytoplasmic segment spans residues Arg291 to Ser309.

The protein belongs to the G-protein coupled receptor 1 family.

It localises to the cell membrane. Odorant receptor. This Pan troglodytes (Chimpanzee) protein is Olfactory receptor 1A1 (OR1A1).